The following is a 1180-amino-acid chain: Phosphatidylinositol 4-kinase (1180 aa).

The PIK helical domain occupies 1-206 (MNKISDTIII…SVYLHSPSTS (206 aa)). Disordered stretches follow at residues 15–84 (NEDE…KHKE), 257–327 (ENDH…ENDN), 355–391 (TSPI…NNIN), 768–799 (TISN…IPHS), and 832–894 (AISP…SPFG). A compositionally biased stretch (low complexity) spans 38 to 74 (NNNNNNILTNVNNNKNNTITSSGGSDSSSSSSNNNNN). Over residues 75 to 84 (KIKKSKKHKE) the composition is skewed to basic residues. Over residues 257 to 270 (ENDHHIENDPKKDI) the composition is skewed to basic and acidic residues. Composition is skewed to low complexity over residues 271–325 (NSNN…SGEN), 364–391 (NNNN…NNIN), 768–793 (TISN…PTLP), and 835–879 (PPSQ…SPTN). The region spanning 895 to 1164 (ESWQEKIERY…LISYSIDHFK (270 aa)) is the PI3K/PI4K catalytic domain. A G-loop region spans residues 901-907 (IERYKKI). The tract at residues 1030 to 1038 (QIKDRHNGN) is catalytic loop. The activation loop stretch occupies residues 1049–1073 (HIDFGFILSNSPGNISFESAPFKLT).

It belongs to the PI3/PI4-kinase family. Type III PI4K subfamily.

The catalysed reaction is a 1,2-diacyl-sn-glycero-3-phospho-(1D-myo-inositol) + ATP = a 1,2-diacyl-sn-glycero-3-phospho-(1D-myo-inositol 4-phosphate) + ADP + H(+). Acts on phosphatidylinositol (PtdIns) in the first committed step in the production of the second messenger inositol-1,4,5,-trisphosphate. The sequence is that of Phosphatidylinositol 4-kinase (pikD) from Dictyostelium discoideum (Social amoeba).